Here is a 428-residue protein sequence, read N- to C-terminus: Serine--tRNA ligase (428 aa).

231 to 233 lines the L-serine pocket; sequence TAE. 262–264 is an ATP binding site; that stretch reads RSE. An L-serine-binding site is contributed by E285. 349–352 contacts ATP; the sequence is EISS. L-serine is bound at residue S385.

This sequence belongs to the class-II aminoacyl-tRNA synthetase family. Type-1 seryl-tRNA synthetase subfamily. In terms of assembly, homodimer. The tRNA molecule binds across the dimer.

It is found in the cytoplasm. The enzyme catalyses tRNA(Ser) + L-serine + ATP = L-seryl-tRNA(Ser) + AMP + diphosphate + H(+). It catalyses the reaction tRNA(Sec) + L-serine + ATP = L-seryl-tRNA(Sec) + AMP + diphosphate + H(+). The protein operates within aminoacyl-tRNA biosynthesis; selenocysteinyl-tRNA(Sec) biosynthesis; L-seryl-tRNA(Sec) from L-serine and tRNA(Sec): step 1/1. Catalyzes the attachment of serine to tRNA(Ser). Is also able to aminoacylate tRNA(Sec) with serine, to form the misacylated tRNA L-seryl-tRNA(Sec), which will be further converted into selenocysteinyl-tRNA(Sec). This is Serine--tRNA ligase from Staphylococcus aureus (strain MSSA476).